The chain runs to 1482 residues: Cystic fibrosis transmembrane conductance regulator (1482 aa).

Residues 1 to 77 (MQRSPLEKAS…KLINALRRCF (77 aa)) are Cytoplasmic-facing. A helical membrane pass occupies residues 78–98 (FWRFMFYGIILYLGEVTKAVQ). An ABC transmembrane type-1 1 domain is found at 81 to 365 (FMFYGIILYL…WAVQTWYDSL (285 aa)). The Extracellular segment spans residues 99–122 (PLLLGRIIASYDPDNKAERSIAIY). The helical transmembrane segment at 123 to 146 (LGVGLCLLFIVRTLLLHPAIFGPH) threads the bilayer. At 147 to 195 (HIGMQMRIAMFSLIYKKTLKLSSRVLDKISIGQLVSLLSNNLNKFDEGL) the chain is on the cytoplasmic side. A helical membrane pass occupies residues 196–216 (ALAHFVWIAPLQVTLLMGLLW). Over 217-222 (ELLQAS) the chain is Extracellular. The helical transmembrane segment at 223-243 (AFCGLAFLVVLALFQAGLGKM) threads the bilayer. Residues 244–298 (MMKYRDQRAGKINERLVITSEMIENIQSVKAYCWEEAMEKMIENLRQTELKLTRK) are Cytoplasmic-facing. Residues 299 to 319 (AAYVRYFNSSAFFFSGLFVVF) traverse the membrane as a helical segment. Topologically, residues 320–339 (LSVLPYALLKGIMLRKIFTT) are extracellular. A helical transmembrane segment spans residues 340-358 (ISFCIVLRMAVTRQFPWAV). Topologically, residues 359–859 (QTWYDSLGAI…YLRYVTVHKS (501 aa)) are cytoplasmic. Residues Trp401, Ser434, 458 to 465 (GSTGAGKT), and Gln493 each bind ATP. One can recognise an ABC transporter 1 domain in the interval 423 to 646 (NGDNSLFFSN…RPDFSSKLMG (224 aa)). A lipid anchor (S-palmitoyl cysteine) is attached at Cys524. Residues Ser549 and Ser660 each carry the phosphoserine modification. A disordered R region region spans residues 654 to 832 (TAERRNSIIT…EEINEEDLRE (179 aa)). Ser670 carries the phosphoserine; by PKA modification. Ser686 is modified (phosphoserine). A Glycyl lysine isopeptide (Lys-Gly) (interchain with G-Cter in ubiquitin) cross-link involves residue Lys688. Residues Ser700 and Ser712 each carry the phosphoserine modification. A Phosphothreonine modification is found at Thr717. Ser737, Ser768, Ser791, Ser796, and Ser814 each carry phosphoserine. Residues 860-880 (LIFVLIWCLVVFLAEVAACLV) form a helical membrane-spanning segment. An ABC transmembrane type-1 2 domain is found at 860–1156 (LIFVLIWCLV…AVNSSIDVDS (297 aa)). Residues 881 to 919 (VLCLLKKTSPQDKGNSTKGANNSYAVIITSTSAYYVFYI) are Extracellular-facing. N-linked (GlcNAc...) asparagine glycans are attached at residues Asn895 and Asn901. The chain crosses the membrane as a discontinuously helical span at residues 920–940 (YVGVADGLLALGLFRGLPLVH). Over 941-991 (TLITVSKILHRKMLHSVLQAPMSTLNTLKAGGILNRFSKDIAVLDDLLPLT) the chain is Cytoplasmic. Residues 992-1012 (IFDFIQLLLIVIGAVAVVSVL) form a helical membrane-spanning segment. The Extracellular portion of the chain corresponds to 1013–1014 (KP). A helical transmembrane segment spans residues 1015 to 1035 (YIFLATVPVIVAFILLRAYFL). Residues 1036 to 1096 (HTSQQLKQLE…TANWFLYLST (61 aa)) are Cytoplasmic-facing. The helical transmembrane segment at 1097–1117 (LRWFQMRIEMIFVIFFIAVTF) threads the bilayer. Topologically, residues 1118 to 1131 (ISILTTGEGEGTVG) are extracellular. Residues 1132–1152 (IILTLAMNIMSTLQWAVNSSI) form a helical membrane-spanning segment. The Cytoplasmic segment spans residues 1153–1482 (DVDSLMRSVS…TEEEVQETRL (330 aa)). An ABC transporter 2 domain is found at 1212–1445 (MTVKDLTAKY…KSLFRQAISP (234 aa)). ATP is bound by residues Tyr1221 and 1246–1253 (GRTGSGKS). The interaction with GORASP2 stretch occupies residues 1388 to 1482 (RTLKQAFADC…TEEEVQETRL (95 aa)). The S-palmitoyl cysteine moiety is linked to residue Cys1397. Residues 1454 to 1464 (HRNSSKQRSRS) show a composition bias toward basic residues. Residues 1454–1482 (HRNSSKQRSRSKIAALKEETEEEVQETRL) are disordered. Position 1458 is a phosphoserine (Ser1458). Residues 1472–1482 (ETEEEVQETRL) are compositionally biased toward acidic residues. The PDZ-binding signature appears at 1480–1482 (TRL).

The protein belongs to the ABC transporter superfamily. ABCC family. CFTR transporter (TC 3.A.1.202) subfamily. As to quaternary structure, monomer; does not require oligomerization for channel activity. May form oligomers in the membrane. Interacts with SLC26A3, SLC26A6 and NHERF1. Interacts with SHANK2. Interacts with MYO6. Interacts (via C-terminus) with GOPC (via PDZ domain); this promotes CFTR internalization and thereby decreases channel activity. Interacts with SLC4A7 through NHERF1. Found in a complex with MYO5B and RAB11A. Interacts with ANO1. Interacts with SLC26A8. Interacts with AHCYL1; the interaction increases CFTR activity. Interacts with CSE1L. The core-glycosylated form interacts with GORASP2 (via PDZ GRASP-type 1 domain) in respone to ER stress. Interacts with MARCHF2; the interaction leads to CFTR ubiqtuitination and degradation. Interacts with ADGRG2. In terms of processing, N-glycosylated. Phosphorylated; cAMP treatment promotes phosphorylation and activates the channel. Dephosphorylation decreases the ATPase activity (in vitro). Phosphorylation at PKA sites activates the channel. Phosphorylation at PKC sites enhances the response to phosphorylation by PKA. Phosphorylated by AMPK; this inhibits channel activity. Post-translationally, ubiquitinated, leading to its degradation in the lysosome. Deubiquitination by USP10 in early endosomes enhances its endocytic recycling to the cell membrane. Ubiquitinated by RNF185 during ER stress. Ubiquitinated by MARCHF2.

It is found in the apical cell membrane. The protein localises to the early endosome membrane. It localises to the cell membrane. Its subcellular location is the recycling endosome membrane. The protein resides in the endoplasmic reticulum membrane. It is found in the nucleus. It carries out the reaction ATP + H2O + closed Cl(-) channel = ADP + phosphate + open Cl(-) channel.. It catalyses the reaction chloride(in) = chloride(out). The catalysed reaction is hydrogencarbonate(in) = hydrogencarbonate(out). The enzyme catalyses ATP + H2O = ADP + phosphate + H(+). Epithelial ion channel that plays an important role in the regulation of epithelial ion and water transport and fluid homeostasis. Mediates the transport of chloride ions across the cell membrane. Possesses an intrinsic ATPase activity and utilizes ATP to gate its channel; the passive flow of anions through the channel is gated by cycles of ATP binding and hydrolysis by the ATP-binding domains. The ion channel is also permeable to HCO(3)(-); selectivity depends on the extracellular chloride concentration. Exerts its function also by modulating the activity of other ion channels and transporters. Contributes to the regulation of the pH and the ion content of the epithelial fluid layer. Modulates the activity of the epithelial sodium channel (ENaC) complex, in part by regulating the cell surface expression of the ENaC complex. May regulate bicarbonate secretion and salvage in epithelial cells by regulating the transporter SLC4A7. Can inhibit the chloride channel activity of ANO1. Plays a role in the chloride and bicarbonate homeostasis during sperm epididymal maturation and capacitation. This is Cystic fibrosis transmembrane conductance regulator from Sus scrofa (Pig).